The primary structure comprises 306 residues: Oxygen-dependent coproporphyrinogen-III oxidase (306 aa).

Residue S93 participates in substrate binding. Residues H97 and H107 each contribute to the a divalent metal cation site. Residue H107 is the Proton donor of the active site. Position 109–111 (109–111 (NVR)) interacts with substrate. H146 and H176 together coordinate a divalent metal cation. The important for dimerization stretch occupies residues 241–276 (YVEYNLVYDRGTLFGLQSGGRTESILMSLPPQVAWG). 259–261 (GGR) provides a ligand contact to substrate.

Belongs to the aerobic coproporphyrinogen-III oxidase family. As to quaternary structure, homodimer. A divalent metal cation is required as a cofactor.

The protein localises to the cytoplasm. The catalysed reaction is coproporphyrinogen III + O2 + 2 H(+) = protoporphyrinogen IX + 2 CO2 + 2 H2O. It functions in the pathway porphyrin-containing compound metabolism; protoporphyrin-IX biosynthesis; protoporphyrinogen-IX from coproporphyrinogen-III (O2 route): step 1/1. Involved in the heme biosynthesis. Catalyzes the aerobic oxidative decarboxylation of propionate groups of rings A and B of coproporphyrinogen-III to yield the vinyl groups in protoporphyrinogen-IX. This chain is Oxygen-dependent coproporphyrinogen-III oxidase, found in Stutzerimonas stutzeri (strain A1501) (Pseudomonas stutzeri).